The sequence spans 468 residues: 6-phospho-beta-galactosidase (468 aa).

D-galactose 6-phosphate-binding residues include glutamine 19, histidine 116, asparagine 159, glutamate 160, and asparagine 297. The active-site Proton donor is the glutamate 160. Glutamate 375 (nucleophile) is an active-site residue. Serine 428, tryptophan 429, lysine 435, and tyrosine 437 together coordinate D-galactose 6-phosphate.

It belongs to the glycosyl hydrolase 1 family.

The catalysed reaction is a 6-phospho-beta-D-galactoside + H2O = D-galactose 6-phosphate + an alcohol. The protein operates within carbohydrate metabolism; lactose degradation; D-galactose 6-phosphate and beta-D-glucose from lactose 6-phosphate: step 1/1. The protein is 6-phospho-beta-galactosidase of Streptococcus gordonii (strain Challis / ATCC 35105 / BCRC 15272 / CH1 / DL1 / V288).